We begin with the raw amino-acid sequence, 101 residues long: Thyrotropin subunit beta (101 aa).

Cystine bridges form between C2–C88, C10–C66, C14–C68, and C71–C78. A glycan (N-linked (GlcNAc...) asparagine) is linked at N6.

It belongs to the glycoprotein hormones subunit beta family. Heterodimer of a common alpha chain and a unique beta chain which confers biological specificity to thyrotropin, lutropin, follitropin and gonadotropin.

It localises to the secreted. In terms of biological role, indispensable for the control of thyroid structure and metabolism. In Phodopus sungorus (Striped hairy-footed hamster), this protein is Thyrotropin subunit beta (TSHB).